Reading from the N-terminus, the 447-residue chain is Chordin-like protein 1 (447 aa).

The signal sequence occupies residues 1–22 (MDGMKYIISLFFIFVFLEGSKT). VWFC domains lie at 30-95 (TYCV…PRCP) and 108-174 (KSCE…RVCR). Asparagine 113 carries N-linked (GlcNAc...) asparagine glycosylation. Residues 174 to 176 (RGD) carry the Cell attachment site motif. The disordered stretch occupies residues 200–224 (SYLRSPYDPPPNRQAGGLPRFPGSR). A VWFC 3 domain is found at 253 to 318 (QVCVSNGKTY…IDGKCCKVCP (66 aa)). N-linked (GlcNAc...) asparagine glycosylation occurs at asparagine 286.

May be glycosylated. As to expression, expressed in heart, brain, lung, liver, kidney and testis.

Its subcellular location is the secreted. Seems to antagonize the function of BMP4 by binding to it and preventing its interaction with receptors. Alters the fate commitment of neural stem cells from gliogenesis to neurogenesis. Contributes to neuronal differentiation of neural stem cells in the brain by preventing the adoption of a glial fate. May play a crucial role in dorsoventral axis formation. Antagonizes the function of BMP7 and may thus play an important role in the embryonic bone formation. Shows no inhibitory effect on the inducing activity of BMP2. Plays a role during anterior segment eye development. The sequence is that of Chordin-like protein 1 (Chrdl1) from Mus musculus (Mouse).